A 450-amino-acid polypeptide reads, in one-letter code: Tubulin beta-6 chain (450 aa).

GTP contacts are provided by Gln11, Glu71, Ser140, Gly144, Thr145, Gly146, Asn206, and Asn228. Residue Glu71 coordinates Mg(2+). The segment at 429–450 (DATVEDEEEYEGEEGLDENYET) is disordered. Over residues 431-450 (TVEDEEEYEGEEGLDENYET) the composition is skewed to acidic residues.

The protein belongs to the tubulin family. Dimer of alpha and beta chains. A typical microtubule is a hollow water-filled tube with an outer diameter of 25 nm and an inner diameter of 15 nM. Alpha-beta heterodimers associate head-to-tail to form protofilaments running lengthwise along the microtubule wall with the beta-tubulin subunit facing the microtubule plus end conferring a structural polarity. Microtubules usually have 13 protofilaments but different protofilament numbers can be found in some organisms and specialized cells. It depends on Mg(2+) as a cofactor.

Its subcellular location is the cytoplasm. It localises to the cytoskeleton. In terms of biological role, tubulin is the major constituent of microtubules, a cylinder consisting of laterally associated linear protofilaments composed of alpha- and beta-tubulin heterodimers. Microtubules grow by the addition of GTP-tubulin dimers to the microtubule end, where a stabilizing cap forms. Below the cap, tubulin dimers are in GDP-bound state, owing to GTPase activity of alpha-tubulin. In Gossypium hirsutum (Upland cotton), this protein is Tubulin beta-6 chain.